A 62-amino-acid polypeptide reads, in one-letter code: Large ribosomal subunit protein uL30 (62 aa).

This sequence belongs to the universal ribosomal protein uL30 family. Part of the 50S ribosomal subunit.

In Beutenbergia cavernae (strain ATCC BAA-8 / DSM 12333 / CCUG 43141 / JCM 11478 / NBRC 16432 / NCIMB 13614 / HKI 0122), this protein is Large ribosomal subunit protein uL30.